Consider the following 472-residue polypeptide: Sarcalumenin (472 aa).

An N-terminal signal peptide occupies residues 1 to 20 (MKRLNLLCCCVASLLLLGTA). A glycan (N-linked (GlcNAc...) asparagine) is linked at Leu59. The region spanning 89-330 (ITSKPMVLFL…IENRMENKIA (242 aa)) is the Dynamin-type G domain. Residues 99-106 (GPWSVGKS) are G1 motif. A G2 motif region spans residues 127–128 (EP). Positions 189–192 (DTPG) are G3 motif. The tract at residues 254-257 (NKAD) is G4 motif. A region of interest (G5 motif) is located at residue Leu278. N-linked (GlcNAc...) asparagine glycans are attached at residues Asn280 and Asn388.

Belongs to the TRAFAC class dynamin-like GTPase superfamily. Dynamin/Fzo/YdjA family. Post-translationally, N-glycosylated.

Its subcellular location is the sarcoplasmic reticulum lumen. The protein resides in the sarcoplasmic reticulum membrane. This chain is Sarcalumenin (SRL), found in Gallus gallus (Chicken).